Reading from the N-terminus, the 291-residue chain is MIQDKSKGAKQTLLERPWFLAVALAGLIGGAMLITSFIRATDNTLSLCSTAKNTAASIAKYTATPIQLQSIVHYATSHTVPQQSFEEISISLNVLKERLPCNFLVFGLGRDSLMWASLNPGGTTVFLEEDPEWIEAVLKDAPSLRAHHVQYRTHLSEAGRLLSTYKNEPMCLPAKAFPIRYNEKCPLALTSLPDEFYDTEWDLIMVDAPKGYFPEAPGRMAAIFSSAIMARNRKGDGTTHVFLHDVNRKVENAFANEFLCEKYKVNSVGRLWHFEIPNAANMTDQPGDRFC.

A helical membrane pass occupies residues 18–38 (WFLAVALAGLIGGAMLITSFI).

Belongs to the methyltransferase superfamily.

It is found in the golgi apparatus membrane. Involved in the methylation of glucuronic acid of different plant cell wall component, but mainly on side chains of arabinogalactans. The polypeptide is Arabinogalactan O-methyltransferase 2 (Arabidopsis thaliana (Mouse-ear cress)).